The sequence spans 145 residues: Plastocyanin, chloroplastic (145 aa).

The N-terminal 48 residues, 1-48 (MASLMRKAAVAPAKATRTTVKASASLQRVAQAAGVAVAGFSLALSANA), are a transit peptide targeting the chloroplast. The Plastocyanin-like domain occupies 49-145 (ANVKLGADSG…AGMVGKVIVQ (97 aa)). Residues His85, Cys130, His133, and Met138 each contribute to the Cu cation site.

This sequence belongs to the plastocyanin family. The cofactor is Cu(2+).

Its subcellular location is the plastid. It is found in the chloroplast thylakoid membrane. Its function is as follows. Participates in electron transfer between P700 and the cytochrome b6-f complex in photosystem I. The protein is Plastocyanin, chloroplastic (PETE) of Tetradesmus obliquus (Green alga).